Here is a 378-residue protein sequence, read N- to C-terminus: Cytochrome b (378 aa).

The next 4 helical transmembrane spans lie at 33–53 (FGSL…FLAM), 77–98 (WLIR…YLHI), 113–133 (WNTG…GYVL), and 178–198 (FFAF…LHFL). Residues His83 and His97 each contribute to the heme b site. 2 residues coordinate heme b: His182 and His196. His201 is a binding site for a ubiquinone. A run of 4 helical transmembrane segments spans residues 226–246 (YKDL…AVFS), 288–308 (LGGV…PFLH), 320–340 (WSQL…WIGG), and 347–367 (LTTV…FLMP).

This sequence belongs to the cytochrome b family. The cytochrome bc1 complex contains 3 respiratory subunits (MT-CYB, CYC1 and UQCRFS1), 2 core proteins (UQCRC1 and UQCRC2) and probably 6 low-molecular weight proteins. The cofactor is heme b.

The protein resides in the mitochondrion inner membrane. Functionally, component of the ubiquinol-cytochrome c reductase complex (complex III or cytochrome b-c1 complex) that is part of the mitochondrial respiratory chain. The b-c1 complex mediates electron transfer from ubiquinol to cytochrome c. Contributes to the generation of a proton gradient across the mitochondrial membrane that is then used for ATP synthesis. The sequence is that of Cytochrome b (mt-cyb) from Indostomus paradoxus (Armoured stickleback).